The primary structure comprises 405 residues: Argininosuccinate synthase (405 aa).

ATP is bound by residues 10-18 (AYSGGLDTS) and Ala37. The L-citrulline site is built by Tyr88 and Ser93. Gly118 contributes to the ATP binding site. Positions 120, 124, and 125 each coordinate L-aspartate. Asn124 contacts L-citrulline. Arg128, Ser179, Ser188, Glu264, and Tyr276 together coordinate L-citrulline.

This sequence belongs to the argininosuccinate synthase family. Type 1 subfamily. As to quaternary structure, homotetramer.

The protein localises to the cytoplasm. The catalysed reaction is L-citrulline + L-aspartate + ATP = 2-(N(omega)-L-arginino)succinate + AMP + diphosphate + H(+). It functions in the pathway amino-acid biosynthesis; L-arginine biosynthesis; L-arginine from L-ornithine and carbamoyl phosphate: step 2/3. The polypeptide is Argininosuccinate synthase (Ectopseudomonas mendocina (strain ymp) (Pseudomonas mendocina)).